The following is a 105-amino-acid chain: U-scoloptoxin(05)-Ssd1a (105 aa).

The first 24 residues, 1–24 (MKEAVKMSCLCIFVFLFLFSLTDA), serve as a signal peptide directing secretion. The tract at residues 79 to 105 (HVPESNQKDGKVSTHMSSCNTDGCNAN) is disordered. The segment covering 92–105 (THMSSCNTDGCNAN) has biased composition (polar residues).

It belongs to the scoloptoxin-05 family. Contains 4 disulfide bonds. As to expression, expressed by the venom gland.

Its subcellular location is the secreted. The chain is U-scoloptoxin(05)-Ssd1a from Scolopendra dehaani (Thai centipede).